A 308-amino-acid polypeptide reads, in one-letter code: Solute carrier family 25 member 47 (308 aa).

Solcar repeat units lie at residues Met-1–His-80, Pro-93–Trp-206, and Pro-215–Leu-302. The next 6 membrane-spanning stretches (helical) occupy residues Phe-3 to Val-23, Val-49 to Val-69, Ile-98 to Thr-116, Gly-190 to Ala-210, Val-217 to Pro-237, and Val-273 to Phe-293.

This sequence belongs to the mitochondrial carrier (TC 2.A.29) family. In terms of tissue distribution, specifically expressed in liver.

The protein resides in the mitochondrion inner membrane. The protein localises to the mitochondrion outer membrane. It carries out the reaction NAD(+)(in) = NAD(+)(out). The catalysed reaction is acetyl-CoA(in) = acetyl-CoA(out). Its function is as follows. Mitochondrial NAD(+) transporter that acts as a 'metabolic gate' in hepatic lipogenesis. Provides NAD(+) substrate to mitochondrial SIRT3 deacetylase and enables its NAD(+)-dependent activities in mitochondrial energy metabolism. This triggers downstream activation of PRKAA1/AMPK-alpha signaling cascade that negatively regulates sterol regulatory element-binding protein (SREBP) transcriptional activities and ATP-consuming lipogenesis to restore cellular energy balance. May transport other mitochondrial metabolites having an aromatic nucleotide and phosphate groups, such as acetyl-CoA. Does not transport amino acids. The transport mechanism remains to be elucidated. The sequence is that of Solute carrier family 25 member 47 from Homo sapiens (Human).